The primary structure comprises 251 residues: Ribonuclease PH (251 aa).

Phosphate is bound by residues arginine 87 and 125–127 (GTR).

Belongs to the RNase PH family. Homohexameric ring arranged as a trimer of dimers.

It catalyses the reaction tRNA(n+1) + phosphate = tRNA(n) + a ribonucleoside 5'-diphosphate. In terms of biological role, phosphorolytic 3'-5' exoribonuclease that plays an important role in tRNA 3'-end maturation. Removes nucleotide residues following the 3'-CCA terminus of tRNAs; can also add nucleotides to the ends of RNA molecules by using nucleoside diphosphates as substrates, but this may not be physiologically important. Probably plays a role in initiation of 16S rRNA degradation (leading to ribosome degradation) during starvation. In Saccharopolyspora erythraea (strain ATCC 11635 / DSM 40517 / JCM 4748 / NBRC 13426 / NCIMB 8594 / NRRL 2338), this protein is Ribonuclease PH.